We begin with the raw amino-acid sequence, 269 residues long: MTFALAYPHIDPIALQIGPIAIRWYALAYIAGLMLGWRYVKFLVARPPNAMTELEVDDFLVWATMGVVLGGRLGYVLFYKPLYYLENPLEIPMVWQGGMSFHGGALGVIVGIIAFSRFRGRNLFQVGDVICCAVPIGLFFGRIANFVNGELFGRVAPDVDWAMVFPGGGPLPRHPSQLYEAGLEGAVLFLVLFGLWRLTGIRHRAGALSGVFLAGYGLARIASEFFRQPDAHLGFLWGGATMGQLLSIPQVLVGLALLAWALRRGAKAA.

Helical transmembrane passes span 17–37, 59–79, 95–115, 123–143, 181–201, 206–226, and 242–262; these read IGPI…MLGW, FLVW…VLFY, WQGG…IIAF, LFQV…FGRI, AGLE…LTGI, GALS…SEFF, and MGQL…AWAL. Arg-142 lines the a 1,2-diacyl-sn-glycero-3-phospho-(1'-sn-glycerol) pocket.

Belongs to the Lgt family.

The protein localises to the cell inner membrane. The enzyme catalyses L-cysteinyl-[prolipoprotein] + a 1,2-diacyl-sn-glycero-3-phospho-(1'-sn-glycerol) = an S-1,2-diacyl-sn-glyceryl-L-cysteinyl-[prolipoprotein] + sn-glycerol 1-phosphate + H(+). It functions in the pathway protein modification; lipoprotein biosynthesis (diacylglyceryl transfer). Catalyzes the transfer of the diacylglyceryl group from phosphatidylglycerol to the sulfhydryl group of the N-terminal cysteine of a prolipoprotein, the first step in the formation of mature lipoproteins. This chain is Phosphatidylglycerol--prolipoprotein diacylglyceryl transferase, found in Paramagnetospirillum magneticum (strain ATCC 700264 / AMB-1) (Magnetospirillum magneticum).